The primary structure comprises 87 residues: Small ribosomal subunit protein uS15c (87 aa).

This sequence belongs to the universal ribosomal protein uS15 family. As to quaternary structure, part of the 30S ribosomal subunit.

It localises to the plastid. The protein resides in the chloroplast. In Oenothera argillicola (Appalachian evening primrose), this protein is Small ribosomal subunit protein uS15c (rps15).